A 937-amino-acid chain; its full sequence is Lysosomal alpha-glucosidase (937 aa).

The N-terminal stretch at 1-23 (MMRWPPCSRPLLGVCTLLSLALL) is a signal peptide. Residues 24-60 (GHILLHDLEVVPRELRGFSQDEIHQACQPGASSPECR) constitute a propeptide that is removed on maturation. The 51-residue stretch at 68 to 118 (TQCDLPPNSRFDCAPDKGITPQQCEARGCCYMPAEWPPDAQMGQPWCFFPP) folds into the P-type domain. Disulfide bonds link C70–C97, C80–C96, and C91–C114. N-linked (GlcNAc...) asparagine glycosylation is found at N127, N220, N259, and N377. D391 contributes to the substrate binding site. An N-linked (GlcNAc...) asparagine glycan is attached at N457. Catalysis depends on D505, which acts as the Nucleophile. E508 is an active-site residue. C520 and C545 are disulfide-bonded. 2 residues coordinate substrate: R587 and D603. A disulfide bridge connects residues C634 and C645. N-linked (GlcNAc...) asparagine glycosylation is present at N639. Position 661 (H661) interacts with substrate. N-linked (GlcNAc...) asparagine glycosylation is found at N867, N888, and N910.

It belongs to the glycosyl hydrolase 31 family.

It localises to the lysosome. The protein localises to the lysosome membrane. The enzyme catalyses Hydrolysis of terminal, non-reducing (1-&gt;4)-linked alpha-D-glucose residues with release of alpha-D-glucose.. Essential for the degradation of glycogen in lysosomes. Has highest activity on alpha-1,4-linked glycosidic linkages, but can also hydrolyze alpha-1,6-linked glucans. This is Lysosomal alpha-glucosidase (GAA) from Bos taurus (Bovine).